We begin with the raw amino-acid sequence, 71 residues long: Large ribosomal subunit protein bL31 (71 aa).

Residues Cys-16, Cys-18, Cys-36, and Cys-39 each contribute to the Zn(2+) site.

This sequence belongs to the bacterial ribosomal protein bL31 family. Type A subfamily. In terms of assembly, part of the 50S ribosomal subunit. Requires Zn(2+) as cofactor.

Binds the 23S rRNA. This Petrotoga mobilis (strain DSM 10674 / SJ95) protein is Large ribosomal subunit protein bL31.